We begin with the raw amino-acid sequence, 71 residues long: Large ribosomal subunit protein bL31 (71 aa).

Zn(2+) contacts are provided by C16, C18, C38, and C41.

This sequence belongs to the bacterial ribosomal protein bL31 family. Type A subfamily. In terms of assembly, part of the 50S ribosomal subunit. Requires Zn(2+) as cofactor.

Binds the 23S rRNA. The polypeptide is Large ribosomal subunit protein bL31 (Neisseria meningitidis serogroup A / serotype 4A (strain DSM 15465 / Z2491)).